A 199-amino-acid polypeptide reads, in one-letter code: 3-isopropylmalate dehydratase small subunit (199 aa).

It belongs to the LeuD family. LeuD type 1 subfamily. In terms of assembly, heterodimer of LeuC and LeuD.

It carries out the reaction (2R,3S)-3-isopropylmalate = (2S)-2-isopropylmalate. It functions in the pathway amino-acid biosynthesis; L-leucine biosynthesis; L-leucine from 3-methyl-2-oxobutanoate: step 2/4. Functionally, catalyzes the isomerization between 2-isopropylmalate and 3-isopropylmalate, via the formation of 2-isopropylmaleate. The sequence is that of 3-isopropylmalate dehydratase small subunit from Leifsonia xyli subsp. xyli (strain CTCB07).